A 289-amino-acid chain; its full sequence is Borealin (289 aa).

The interval 1–58 (MAPKKRSSRGTRTNTLRSRKLASFLKDFDREVQVRTKQIESDRQTLLKEVENLYNIEI) is required for interaction with INCENP. The tract at residues 1 to 88 (MAPKKRSSRG…NKQALEEAAK (88 aa)) is required for centromere localization. The segment at 1–150 (MAPKKRSSRG…KKSHKNLRSA (150 aa)) is required for interaction with SENP3. The segment at 10-109 (GTRTNTLRSR…TAEAIQTPLK (100 aa)) is required to form a minimal CPC core complex that localizes to the central spindle and midbody and properly executes the role of the CPC during cytokinesis. The segment at 20–78 (KLASFLKDFDREVQVRTKQIESDRQTLLKEVENLYNIEILRLPKALQGMKWLDYFALGG) is required for interaction with INCENP and BIRC5. R91 carries the post-translational modification Citrulline. T94 is subject to Phosphothreonine; by TTK. T106 is modified (phosphothreonine). Phosphoserine is present on S110. Positions 122 to 173 (SIKEEEEEEEEGGGGGGRTKKSHKNLRSAKVKRCLPSKKRTQSIQGRGRSKR) are disordered. A compositionally biased stretch (acidic residues) spans 123–133 (IKEEEEEEEEG). The span at 139-162 (RTKKSHKNLRSAKVKRCLPSKKRT) shows a compositional bias: basic residues. Residue K145 forms a Glycyl lysine isopeptide (Lys-Gly) (interchain with G-Cter in SUMO2) linkage. At S175 the chain carries Phosphoserine. Phosphothreonine occurs at positions 198 and 213. A phosphoserine mark is found at S228, S233, S247, and S253.

This sequence belongs to the borealin family. In terms of assembly, may form homooligomers and homodimers. Component of the chromosomal passenger complex (CPC) composed of at least BIRC5/survivin, CDCA8/borealin, INCENP, AURKB or AURKC; in the complex forms a triple-helix bundle-based subcomplex with INCENP and BIRC5. Interacts with SENP3, UBE2I and RANBP2. Interacts (phosphorylated) with SGO1 and SGO2A; the association is dependent on CDK1. Post-translationally, phosphorylated by TTK, essentially at Thr-94. Phosphorylation (probably by CDK1) promotes targeting of the CPC to centromeric DNA. Sumoylated by UBE2I and RANBP2. Desumoylated by SENP3 through the removal of SUMO2 and SUMO3. In terms of processing, citrullinated by PADI4.

The protein resides in the nucleus. Its subcellular location is the nucleolus. It localises to the cytoplasm. The protein localises to the chromosome. It is found in the centromere. The protein resides in the cytoskeleton. Its subcellular location is the spindle. Its function is as follows. Component of the chromosomal passenger complex (CPC), a complex that acts as a key regulator of mitosis. The CPC complex has essential functions at the centromere in ensuring correct chromosome alignment and segregation and is required for chromatin-induced microtubule stabilization and spindle assembly. In the complex, it may be required to direct the CPC to centromeric DNA. Major effector of the TTK kinase in the control of attachment-error-correction and chromosome alignment. The protein is Borealin (Cdca8) of Mus musculus (Mouse).